The sequence spans 73 residues: Large ribosomal subunit protein bL31 (73 aa).

It belongs to the bacterial ribosomal protein bL31 family. Type A subfamily. As to quaternary structure, part of the 50S ribosomal subunit.

In terms of biological role, binds the 23S rRNA. This is Large ribosomal subunit protein bL31 from Rhizobium rhizogenes (strain K84 / ATCC BAA-868) (Agrobacterium radiobacter).